Reading from the N-terminus, the 467-residue chain is Putative laccase-16 (467 aa).

Plastocyanin-like domains follow at residues 7–88, 98–225, and 318–451; these read VLGS…PKHG, KEIP…YTDS, and DFPN…KDGK. Cu cation contacts are provided by H22, H24, H67, and H69. Residues H368, H371, H373, H430, C431, H432, H436, and M441 each contribute to the Cu cation site.

This sequence belongs to the multicopper oxidase family. The cofactor is Cu cation.

It localises to the secreted. It is found in the extracellular space. The protein localises to the apoplast. The enzyme catalyses 4 hydroquinone + O2 = 4 benzosemiquinone + 2 H2O. Its function is as follows. Lignin degradation and detoxification of lignin-derived products. In Oryza sativa subsp. japonica (Rice), this protein is Putative laccase-16 (LAC16).